A 320-amino-acid polypeptide reads, in one-letter code: MTDAAIAEKDLGNAAYKQKDFEKAHVHYDKAIELDPSNITFYNNKAAVYFEEKKFAECVQFCEKAVEVGRETRADYKLIAKAMSRAGNAFQKQNDLSLAVQWFHRSLSEFRDPELVKKVKELEKQLKAAERLAYINPELAQEEKNKGNEYFKKGDYPTAMRHYNEAVKRDPENAILYSNRAACLTKLMEFQRALDDCDTCIRLDSKFIKGYIRKAACLVAMREWSKAQRAYEDALQVDPSNEEAREGVRNCLRSNDEDPEKAKERSLADPEVQEILRDPGMRMILEQMSNDPGAVREHLKNPEIFQKLMKLRDAGVIQMR.

TPR repeat units follow at residues 5 to 38 (AIAE…DPSN), 40 to 72 (TFYN…GRET), 80 to 113 (AKAM…FRDP), 140 to 173 (AQEE…DPEN), 175 to 207 (ILYS…DSKF), and 208 to 241 (IKGY…DPSN). Positions 241-269 (NEEAREGVRNCLRSNDEDPEKAKERSLAD) are disordered. Basic and acidic residues predominate over residues 242 to 269 (EEAREGVRNCLRSNDEDPEKAKERSLAD). Residues 269 to 308 (DPEVQEILRDPGMRMILEQMSNDPGAVREHLKNPEIFQKL) enclose the STI1 domain.

Forms a complex with hsp-1/hsp70 and daf-21/hsp90. Interacts with daf-21/hsp90 (via the C-terminal MEEVD pentapeptide). As to expression, expressed ubiquitously in the whole body. Detected predominantly in the pharyngeal muscles, vulva epithelial cells, striated body-wall muscles, spermathecae and intestinal cell ring. Also observed in the tail regions of hermaphrodite and in the sensory rays and spicules of males.

It localises to the cytoplasm. In terms of biological role, plays a role in gonad development. Up-regulates longevity and thermotolerance. Binds daf-21/hsp90 and inhibits its ATPase activity. This chain is Stress-induced-phosphoprotein 1, found in Caenorhabditis elegans.